We begin with the raw amino-acid sequence, 235 residues long: Pyridoxine 5'-phosphate synthase (235 aa).

Residue asparagine 7 participates in 3-amino-2-oxopropyl phosphate binding. Residue 9–10 (DH) coordinates 1-deoxy-D-xylulose 5-phosphate. Arginine 18 contributes to the 3-amino-2-oxopropyl phosphate binding site. The Proton acceptor role is filled by histidine 43. Residues arginine 45 and histidine 50 each coordinate 1-deoxy-D-xylulose 5-phosphate. The Proton acceptor role is filled by glutamate 70. Threonine 100 is a 1-deoxy-D-xylulose 5-phosphate binding site. Catalysis depends on histidine 187, which acts as the Proton donor. 3-amino-2-oxopropyl phosphate contacts are provided by residues glycine 188 and 209 to 210 (GH).

The protein belongs to the PNP synthase family. Homooctamer; tetramer of dimers.

Its subcellular location is the cytoplasm. It carries out the reaction 3-amino-2-oxopropyl phosphate + 1-deoxy-D-xylulose 5-phosphate = pyridoxine 5'-phosphate + phosphate + 2 H2O + H(+). The protein operates within cofactor biosynthesis; pyridoxine 5'-phosphate biosynthesis; pyridoxine 5'-phosphate from D-erythrose 4-phosphate: step 5/5. Its function is as follows. Catalyzes the complicated ring closure reaction between the two acyclic compounds 1-deoxy-D-xylulose-5-phosphate (DXP) and 3-amino-2-oxopropyl phosphate (1-amino-acetone-3-phosphate or AAP) to form pyridoxine 5'-phosphate (PNP) and inorganic phosphate. In Desulfatibacillum aliphaticivorans, this protein is Pyridoxine 5'-phosphate synthase.